The primary structure comprises 489 residues: Glutamate--tRNA ligase (489 aa).

A 'HIGH' region motif is present at residues 11–21; it reads PSPTGHLHIGN. The short motif at 252 to 256 is the 'KMSKS' region element; sequence KLSKR. Lys-255 is an ATP binding site.

This sequence belongs to the class-I aminoacyl-tRNA synthetase family. Glutamate--tRNA ligase type 1 subfamily. Monomer.

The protein resides in the cytoplasm. The catalysed reaction is tRNA(Glu) + L-glutamate + ATP = L-glutamyl-tRNA(Glu) + AMP + diphosphate. Functionally, catalyzes the attachment of glutamate to tRNA(Glu) in a two-step reaction: glutamate is first activated by ATP to form Glu-AMP and then transferred to the acceptor end of tRNA(Glu). This Oceanobacillus iheyensis (strain DSM 14371 / CIP 107618 / JCM 11309 / KCTC 3954 / HTE831) protein is Glutamate--tRNA ligase.